Reading from the N-terminus, the 335-residue chain is tRNA N6-adenosine threonylcarbamoyltransferase (335 aa).

A divalent metal cation-binding residues include histidine 109, histidine 113, and tyrosine 130. Substrate is bound by residues 130–134, aspartate 162, glycine 177, glutamate 181, and asparagine 266; that span reads YVSGG. A divalent metal cation is bound at residue aspartate 294.

This sequence belongs to the KAE1 / TsaD family. Component of the EKC/KEOPS complex composed of at least GON7, TP53RK, TPRKB, OSGEP and LAGE3; the whole complex dimerizes. A divalent metal cation serves as cofactor.

It localises to the cytoplasm. Its subcellular location is the nucleus. The enzyme catalyses L-threonylcarbamoyladenylate + adenosine(37) in tRNA = N(6)-L-threonylcarbamoyladenosine(37) in tRNA + AMP + H(+). Its function is as follows. Component of the EKC/KEOPS complex that is required for the formation of a threonylcarbamoyl group on adenosine at position 37 (t(6)A37) in tRNAs that read codons beginning with adenine. The complex is probably involved in the transfer of the threonylcarbamoyl moiety of threonylcarbamoyl-AMP (TC-AMP) to the N6 group of A37. OSGEP likely plays a direct catalytic role in this reaction, but requires other protein(s) of the complex to fulfill this activity. The polypeptide is tRNA N6-adenosine threonylcarbamoyltransferase (Bos taurus (Bovine)).